The primary structure comprises 349 residues: AA9 family lytic polysaccharide monooxygenase C (349 aa).

Residues 1 to 19 (MKSTFGLLALAAAAKLVSA) form the signal peptide. 2 residues coordinate Cu(2+): H20 and H102. Cysteines 62 and 183 form a disulfide. An O2-binding site is contributed by H169. Y180 serves as a coordination point for Cu(2+). The tract at residues 233-304 (DGSSSGSSGS…SGSNSGSDSC (72 aa)) is disordered. Low complexity-rich tracts occupy residues 234 to 262 (GSSS…AAPT) and 269 to 304 (TSAT…SDSC). The CBM1 domain maps to 311–347 (GSVKIYGQCGGQNYSGPTSCEAGLICKEWNPYYHQCV). Intrachain disulfides connect C319/C336 and C330/C346. N-linked (GlcNAc...) asparagine glycosylation is present at N323.

Belongs to the polysaccharide monooxygenase AA9 family. It depends on Cu(2+) as a cofactor.

The protein localises to the secreted. It catalyses the reaction [(1-&gt;4)-beta-D-glucosyl]n+m + reduced acceptor + O2 = 4-dehydro-beta-D-glucosyl-[(1-&gt;4)-beta-D-glucosyl]n-1 + [(1-&gt;4)-beta-D-glucosyl]m + acceptor + H2O.. In terms of biological role, lytic polysaccharide monooxygenase (LPMO) that depolymerizes crystalline and amorphous polysaccharides via the oxidation of scissile alpha- or beta-(1-4)-glycosidic bonds, yielding C4 oxidation products. Catalysis by LPMOs requires the reduction of the active-site copper from Cu(II) to Cu(I) by a reducing agent and H(2)O(2) or O(2) as a cosubstrate. Active on cellulose and cello-oligosaccharides, as well as plant cell wall-derived hemicellulosic polysaccharides. Also active on cello-oligosaccharides such as cellohexaose, cellopentaose or cellotetraose. This chain is AA9 family lytic polysaccharide monooxygenase C, found in Aspergillus fumigatus (strain ATCC MYA-4609 / CBS 101355 / FGSC A1100 / Af293) (Neosartorya fumigata).